A 1066-amino-acid chain; its full sequence is Cytoplasmic dynein 2 intermediate chain 1 (1066 aa).

2 disordered regions span residues 22–366 (LWAI…ENAR) and 381–408 (YEDD…LEEL). Ser30 is modified (phosphoserine). 5 stretches are compositionally biased toward basic and acidic residues: residues 30–135 (SKEE…EELR), 147–171 (ETRD…RSEE), 180–256 (DEDR…EERH), 264–308 (GFHF…KRDG), and 316–336 (NLVR…HEEG). Phosphoserine is present on Ser247. 2 stretches are compositionally biased toward acidic residues: residues 351–362 (ETVEIEKEETDL) and 381–397 (YEDD…ESSN). Positions 399 to 408 (PESREKLEEL) are enriched in basic and acidic residues. The binding to the DYNLT2B-DYNLT1/DYNLT3 dimer stretch occupies residues 473–552 (ASHRQKSRTQ…DIQTEEIETR (80 aa)). 4 WD repeats span residues 694-734 (ICES…RLHY), 775-821 (VHKK…KADI), 907-947 (IRPV…PLLQ), and 952-992 (TDSH…LGPV).

Belongs to the dynein light intermediate chain family. Intermediate chain of the cytoplasmic dynein complex 2, a multisubunit complex, composed at least of eleven different proteins. The cytoplasmic dynein 2 complex consists of two catalytic heavy chains (HCs) and a number of non-catalytic subunits presented by intermediate chains (ICs), light intermediate chains (LICs) and light chains (LCs). Among them, a heavy chain (DYNC2H1), two intermediate chains (DYNC2I2 and DYNC2I1), a light intermediate chain (DYNC2LI1), and a light chain (DYNLT2B) are unique to the cytoplasmic dynein complex 2, but a subset of the light chains are also shared by dynein-1 and dynein-2 complexes. Interacts with DYNC2I2; their C-terminal domains each bind a copy of the heavy chain, and their extended N-terminal regions are held together by an array of light chain dimers. Interacts with DYNLT2B. Interacts (via the N-terminal half) with DYNLT2B-DYNLT1 dimer or with DYNLT2B-DYNLT3 dimer; this interaction is crucial for retrograde trafficking of ciliary proteins. As to expression, expressed in chondrocytes (at protein level).

Its subcellular location is the cell projection. It localises to the cilium. It is found in the cytoplasm. The protein resides in the cytoskeleton. The protein localises to the microtubule organizing center. Its subcellular location is the centrosome. Its function is as follows. Acts as one of several non-catalytic accessory components of the cytoplasmic dynein 2 complex (dynein-2 complex), a motor protein complex that drives the movement of cargos along microtubules within cilia and flagella in concert with the intraflagellar transport (IFT) system. DYNC2I1 plays a major role in retrograde ciliary protein trafficking in cilia and flagella. Also requires to maintain a functional transition zone. The chain is Cytoplasmic dynein 2 intermediate chain 1 from Homo sapiens (Human).